The sequence spans 591 residues: UvrABC system protein C (591 aa).

Positions Asp-14 to Val-91 constitute a GIY-YIG domain. Positions Lys-196 to Val-231 constitute a UVR domain.

This sequence belongs to the UvrC family. As to quaternary structure, interacts with UvrB in an incision complex.

It localises to the cytoplasm. Functionally, the UvrABC repair system catalyzes the recognition and processing of DNA lesions. UvrC both incises the 5' and 3' sides of the lesion. The N-terminal half is responsible for the 3' incision and the C-terminal half is responsible for the 5' incision. This Halalkalibacterium halodurans (strain ATCC BAA-125 / DSM 18197 / FERM 7344 / JCM 9153 / C-125) (Bacillus halodurans) protein is UvrABC system protein C.